The primary structure comprises 123 residues: Fluoride-specific ion channel FluC (123 aa).

A run of 4 helical transmembrane segments spans residues 3-23 (IAWV…LSNA), 34-54 (WGTL…FYLF), 67-87 (LVLV…LETL), and 99-119 (LLNM…GLVV). Na(+)-binding residues include glycine 74 and threonine 77.

This sequence belongs to the fluoride channel Fluc/FEX (TC 1.A.43) family.

The protein resides in the cell inner membrane. It catalyses the reaction fluoride(in) = fluoride(out). Its activity is regulated as follows. Na(+) is not transported, but it plays an essential structural role and its presence is essential for fluoride channel function. Fluoride-specific ion channel. Important for reducing fluoride concentration in the cell, thus reducing its toxicity. This Magnetococcus marinus (strain ATCC BAA-1437 / JCM 17883 / MC-1) protein is Fluoride-specific ion channel FluC.